We begin with the raw amino-acid sequence, 372 residues long: Putative F-box/kelch-repeat protein At3g22730 (372 aa).

Residues 1–50 (MMMSDLSLDLVEEILSRVPATSLKRLRSTCKLWNALFKNPGFTKKQFLKA) enclose the F-box domain. Kelch repeat units lie at residues 155-204 (ILRC…SFKG), 245-293 (ALSV…PIRG), and 324-372 (KVYI…IIKE).

This chain is Putative F-box/kelch-repeat protein At3g22730, found in Arabidopsis thaliana (Mouse-ear cress).